Consider the following 396-residue polypeptide: S-adenosylmethionine synthase (396 aa).

His-16 contributes to the ATP binding site. Asp-18 provides a ligand contact to Mg(2+). Residue Glu-44 coordinates K(+). Residues Glu-57 and Gln-100 each coordinate L-methionine. Positions 100-110 (QSVDIAQGVDR) are flexible loop. ATP-binding positions include 165 to 167 (DAK), Asp-240, 246 to 247 (RK), Ala-263, and Lys-267. Asp-240 contacts L-methionine. Lys-271 contacts L-methionine.

It belongs to the AdoMet synthase family. Homotetramer; dimer of dimers. Requires Mg(2+) as cofactor. K(+) serves as cofactor.

The protein resides in the cytoplasm. The catalysed reaction is L-methionine + ATP + H2O = S-adenosyl-L-methionine + phosphate + diphosphate. It participates in amino-acid biosynthesis; S-adenosyl-L-methionine biosynthesis; S-adenosyl-L-methionine from L-methionine: step 1/1. Catalyzes the formation of S-adenosylmethionine (AdoMet) from methionine and ATP. The overall synthetic reaction is composed of two sequential steps, AdoMet formation and the subsequent tripolyphosphate hydrolysis which occurs prior to release of AdoMet from the enzyme. This Pseudomonas syringae pv. tomato (strain ATCC BAA-871 / DC3000) protein is S-adenosylmethionine synthase.